A 345-amino-acid chain; its full sequence is Adenylosuccinate synthetase (345 aa).

Residues 18–24 and 48–50 contribute to the GTP site; these read GDEGKGK and GHT. D19 functions as the Proton acceptor in the catalytic mechanism. Mg(2+) contacts are provided by D19 and G48. Residues 19–22, 46–49, T133, R147, Q185, T200, and R262 contribute to the IMP site; these read DEGK and NAGH. The active-site Proton donor is H49. 258 to 264 lines the substrate pocket; it reads TVTGRRR. GTP is bound by residues R264, 290–292, and 330–332; these read GLD and STG.

It belongs to the adenylosuccinate synthetase family. Homodimer. Mg(2+) serves as cofactor.

It localises to the cytoplasm. The enzyme catalyses IMP + L-aspartate + GTP = N(6)-(1,2-dicarboxyethyl)-AMP + GDP + phosphate + 2 H(+). Its pathway is purine metabolism; AMP biosynthesis via de novo pathway; AMP from IMP: step 1/2. Plays an important role in the de novo pathway of purine nucleotide biosynthesis. Catalyzes the first committed step in the biosynthesis of AMP from IMP. The chain is Adenylosuccinate synthetase from Methanocaldococcus jannaschii (strain ATCC 43067 / DSM 2661 / JAL-1 / JCM 10045 / NBRC 100440) (Methanococcus jannaschii).